A 193-amino-acid chain; its full sequence is Adenylate kinase (193 aa).

ATP is bound at residue 11-16 (GAGKGT). The tract at residues 31-60 (STGDLLRAEVKAQTPLGCQAKVYMDAGELV) is NMP. Residues T32, R37, 58–60 (ELV), 85–88 (GFPR), and Q92 each bind AMP. The interval 126 to 136 (ARGKEQGRSDD) is LID. R127 serves as a coordination point for ATP. Positions 133 and 145 each coordinate AMP. Residue Q173 participates in ATP binding.

The protein belongs to the adenylate kinase family. As to quaternary structure, monomer.

The protein localises to the cytoplasm. The enzyme catalyses AMP + ATP = 2 ADP. The protein operates within purine metabolism; AMP biosynthesis via salvage pathway; AMP from ADP: step 1/1. Its function is as follows. Catalyzes the reversible transfer of the terminal phosphate group between ATP and AMP. Plays an important role in cellular energy homeostasis and in adenine nucleotide metabolism. This is Adenylate kinase from Synechococcus sp. (strain JA-2-3B'a(2-13)) (Cyanobacteria bacterium Yellowstone B-Prime).